The sequence spans 503 residues: WAS/WASL-interacting protein family member 1 (503 aa).

Pro residues predominate over residues methionine 1 to threonine 14. A disordered region spans residues methionine 1–arginine 503. Positions glutamate 21–alanine 31 are enriched in polar residues. In terms of domain architecture, WH2 spans glycine 32–threonine 49. An Asymmetric dimethylarginine modification is found at arginine 33. Residues lysine 45–lysine 48 form a binds actin region. Gly residues predominate over residues alanine 65 to phenylalanine 104. Residues serine 121 to serine 137 show a composition bias toward low complexity. An omega-N-methylarginine mark is found at arginine 125 and arginine 134. 4 stretches are compositionally biased toward pro residues: residues phenylalanine 141 to serine 154, proline 161 to proline 174, serine 182 to proline 191, and proline 204 to proline 223. Phosphoserine is present on serine 142. A Phosphoserine modification is found at serine 234. The segment covering serine 238–serine 247 has biased composition (low complexity). Composition is skewed to pro residues over residues valine 282–proline 298 and alanine 306–proline 323. Serine 340 carries the phosphoserine modification. Residue threonine 345 is modified to Phosphothreonine. A compositionally biased stretch (pro residues) spans proline 346–aspartate 371. Serine 350 is subject to Phosphoserine. XRSGPXPPXP motif repeat units follow at residues glycine 352–proline 361, glycine 374–proline 383, and proline 410–proline 419. Residues glycine 413 to serine 434 show a composition bias toward pro residues. Residues alanine 480–glycine 494 are compositionally biased toward basic and acidic residues.

This sequence belongs to the verprolin family. Binds to WAS, profilin and actin. Binds to WASL. Interacts with DBNL. Interacts with FNBP1L (via the SH3 domain). As to expression, highly expressed in peripheral blood mononuclear cells, spleen, placenta, small intestine, colon and thymus. Lower expression in ovary, heart, brain, lung, liver, skeletal muscle, kidney, pancreas, prostate and testis.

It localises to the cytoplasmic vesicle. Its subcellular location is the cytoplasm. The protein resides in the cytoskeleton. The protein localises to the cell projection. It is found in the ruffle. In terms of biological role, plays a role in the reorganization of the actin cytoskeleton. Contributes with NCK1 and GRB2 in the recruitment and activation of WASL. May participate in regulating the subcellular localization of WASL, resulting in the disassembly of stress fibers in favor of filopodia formation. Plays a role in the formation of cell ruffles. Plays an important role in the intracellular motility of vaccinia virus by functioning as an adapter for recruiting WASL to vaccinia virus. The protein is WAS/WASL-interacting protein family member 1 (WIPF1) of Homo sapiens (Human).